A 956-amino-acid chain; its full sequence is Bifunctional glutamine synthetase adenylyltransferase/adenylyl-removing enzyme (956 aa).

Residues 1–450 (MENMSEQALP…YFKETVGGQE (450 aa)) form an adenylyl removase region. An adenylyl transferase region spans residues 456–956 (EQWTAQLWSL…IYEQVLNNGQ (501 aa)).

This sequence belongs to the GlnE family. Mg(2+) serves as cofactor.

The catalysed reaction is [glutamine synthetase]-O(4)-(5'-adenylyl)-L-tyrosine + phosphate = [glutamine synthetase]-L-tyrosine + ADP. It catalyses the reaction [glutamine synthetase]-L-tyrosine + ATP = [glutamine synthetase]-O(4)-(5'-adenylyl)-L-tyrosine + diphosphate. Its function is as follows. Involved in the regulation of glutamine synthetase GlnA, a key enzyme in the process to assimilate ammonia. When cellular nitrogen levels are high, the C-terminal adenylyl transferase (AT) inactivates GlnA by covalent transfer of an adenylyl group from ATP to specific tyrosine residue of GlnA, thus reducing its activity. Conversely, when nitrogen levels are low, the N-terminal adenylyl removase (AR) activates GlnA by removing the adenylyl group by phosphorolysis, increasing its activity. The regulatory region of GlnE binds the signal transduction protein PII (GlnB) which indicates the nitrogen status of the cell. In Shewanella loihica (strain ATCC BAA-1088 / PV-4), this protein is Bifunctional glutamine synthetase adenylyltransferase/adenylyl-removing enzyme.